We begin with the raw amino-acid sequence, 506 residues long: Trans-cinnamate 4-monooxygenase (506 aa).

The chain crosses the membrane as a helical span at residues 3–23 (LLLLEKALLGLFAAAVVAIAV). (E)-cinnamate contacts are provided by residues 213 to 218 (RSRLAQ) and alanine 306. Heme is bound at residue cysteine 447.

The protein belongs to the cytochrome P450 family. Heme is required as a cofactor.

It localises to the membrane. The catalysed reaction is (E)-cinnamate + reduced [NADPH--hemoprotein reductase] + O2 = (E)-4-coumarate + oxidized [NADPH--hemoprotein reductase] + H2O + H(+). It functions in the pathway phenylpropanoid metabolism; trans-4-coumarate biosynthesis; trans-4-coumarate from trans-cinnamate: step 1/1. Functionally, catalyzes the first oxidative step of the phenylpropanoid pathway in higher plants by transforming trans-cinnamate into p-coumarate. The compounds formed by this pathway are essential components for lignification, pollination, and defense against ultraviolet light, predators and pathogens. This chain is Trans-cinnamate 4-monooxygenase (CYP73A2), found in Ruta graveolens (Common rue).